A 255-amino-acid polypeptide reads, in one-letter code: MNKLLIIDGLNLVRRIHAVLPDENDIASVQERVLAASKKMLLQHQPTHCMVVWDGNEPSWRKTLYSDYKKGRKPMPTALSDGLVNIKATLAEHDINSFDAQSEADDVIATIAMKMISNKGEVIIVSTDKGFSQLPTKNLTLWDHFNQQVFDVEQYEKKLGIEQYQMLDFIALAGDSGNKIPGIMGIGPKSAADLLNKFRTLANLYRSLDNLGAKQALKLAEGKEIARISYKLAQLQCDIPLNINLKQFRINPITN.

Aspartate 105 serves as a coordination point for Mg(2+). Residues 163 to 253 (QYQMLDFIAL…NLKQFRINPI (91 aa)) enclose the 5'-3' exonuclease domain. K(+) is bound by residues leucine 172, alanine 173, proline 181, isoleucine 183, and isoleucine 186. The interval 185–190 (GIGPKS) is interaction with DNA.

The protein belongs to the Xni family. Mg(2+) is required as a cofactor. K(+) serves as cofactor.

Its function is as follows. Has flap endonuclease activity. During DNA replication, flap endonucleases cleave the 5'-overhanging flap structure that is generated by displacement synthesis when DNA polymerase encounters the 5'-end of a downstream Okazaki fragment. This chain is Flap endonuclease Xni, found in Shewanella frigidimarina (strain NCIMB 400).